The following is a 660-amino-acid chain: Bifunctional polymyxin resistance protein ArnA (660 aa).

Residues 1–304 form a formyltransferase ArnAFT region; sequence MKAIVFAYHD…EMGIVTDVRV (304 aa). The Proton donor; for formyltransferase activity role is filled by histidine 104. (6R)-10-formyltetrahydrofolate is bound by residues arginine 114 and 136 to 140; that span reads TAKAD. The interval 314-660 is dehydrogenase ArnADH; the sequence is RRQRVLILGV…RGAVEELGNK (347 aa). Residues aspartate 347 and 368–369 contribute to the NAD(+) site; that span reads DV. UDP-alpha-D-glucuronate-binding positions include alanine 393, tyrosine 398, and 432 to 433; that span reads TS. The Proton acceptor; for decarboxylase activity role is filled by glutamate 434. Residues arginine 460, asparagine 492, 526-535, and tyrosine 613 each bind UDP-alpha-D-glucuronate; that span reads KLVDGGEQKR. Catalysis depends on arginine 619, which acts as the Proton donor; for decarboxylase activity.

In the N-terminal section; belongs to the Fmt family. UDP-L-Ara4N formyltransferase subfamily. It in the C-terminal section; belongs to the NAD(P)-dependent epimerase/dehydratase family. UDP-glucuronic acid decarboxylase subfamily. As to quaternary structure, homohexamer, formed by a dimer of trimers.

The enzyme catalyses UDP-alpha-D-glucuronate + NAD(+) = UDP-beta-L-threo-pentopyranos-4-ulose + CO2 + NADH. It catalyses the reaction UDP-4-amino-4-deoxy-beta-L-arabinose + (6R)-10-formyltetrahydrofolate = UDP-4-deoxy-4-formamido-beta-L-arabinose + (6S)-5,6,7,8-tetrahydrofolate + H(+). It functions in the pathway nucleotide-sugar biosynthesis; UDP-4-deoxy-4-formamido-beta-L-arabinose biosynthesis; UDP-4-deoxy-4-formamido-beta-L-arabinose from UDP-alpha-D-glucuronate: step 1/3. It participates in nucleotide-sugar biosynthesis; UDP-4-deoxy-4-formamido-beta-L-arabinose biosynthesis; UDP-4-deoxy-4-formamido-beta-L-arabinose from UDP-alpha-D-glucuronate: step 3/3. Its pathway is bacterial outer membrane biogenesis; lipopolysaccharide biosynthesis. Bifunctional enzyme that catalyzes the oxidative decarboxylation of UDP-glucuronic acid (UDP-GlcUA) to UDP-4-keto-arabinose (UDP-Ara4O) and the addition of a formyl group to UDP-4-amino-4-deoxy-L-arabinose (UDP-L-Ara4N) to form UDP-L-4-formamido-arabinose (UDP-L-Ara4FN). The modified arabinose is attached to lipid A and is required for resistance to polymyxin and cationic antimicrobial peptides. The protein is Bifunctional polymyxin resistance protein ArnA of Proteus mirabilis (strain HI4320).